Reading from the N-terminus, the 250-residue chain is Proteasome subunit alpha type-7-A (250 aa).

Lysine 62 is covalently cross-linked (Glycyl lysine isopeptide (Lys-Gly) (interchain with G-Cter in ubiquitin)).

Belongs to the peptidase T1A family. In terms of assembly, component of the 20S core complex of the 26S proteasome. The 26S proteasome is composed of a core protease (CP), known as the 20S proteasome, capped at one or both ends by the 19S regulatory particle (RP/PA700). The 20S proteasome core is composed of 28 subunits that are arranged in four stacked rings, resulting in a barrel-shaped structure. The two end rings are each formed by seven alpha subunits, and the two central rings are each formed by seven beta subunits. The catalytic chamber with the active sites is on the inside of the barrel. Interacts with KIN10 and KIN11 SnRK subunits, and with the SKP1A/ASK1 subunit of the SCF E3 ubiquitin ligase complex. In terms of tissue distribution, expressed in roots, leaves and flowers.

The protein resides in the cytoplasm. Its subcellular location is the nucleus. In terms of biological role, the proteasome is a multicatalytic proteinase complex which is characterized by its ability to cleave peptides with Arg, Phe, Tyr, Leu, and Glu adjacent to the leaving group at neutral or slightly basic pH. The proteasome has an ATP-dependent proteolytic activity. Mediates the association of the SCF(TIR1) E3 ubiquitin ligase complex with the proteasome. This chain is Proteasome subunit alpha type-7-A (PAD1), found in Arabidopsis thaliana (Mouse-ear cress).